The chain runs to 490 residues: Dipeptide and tripeptide permease A (490 aa).

Residues 1 to 34 (MSNANNNQPENVSLNAFKQPRAFYLIFSIELWER) are Cytoplasmic-facing. The chain crosses the membrane as a helical span at residues 35 to 55 (FGYYGLQGIMAVYLVKMLGMT). Over 56-59 (EADS) the chain is Periplasmic. The chain crosses the membrane as a helical span at residues 60–80 (ITLFSSFSALVYGFVAIGGWL). Over 81–89 (GDKVLGAKR) the chain is Cytoplasmic. A helical membrane pass occupies residues 90-110 (VIMLGALVLAIGYAFVAYSGH). Residue Asp111 is a topological domain, periplasmic. Residues 112-132 (LSLVYVGMATIAVGNGLFKAN) traverse the membrane as a helical segment. The Cytoplasmic segment spans residues 133–153 (PSSLLSTCYEKNDPRLDGAFT). A helical membrane pass occupies residues 154-174 (MYYMSVNIGSFFSMLATPWLA). The Periplasmic portion of the chain corresponds to 175–176 (AR). The chain crosses the membrane as a helical span at residues 177–197 (FGWSVAFSLSVVGMLITLVNF). Residues 198-217 (MMCRRWVKDQGSKPDFAPLQ) lie on the Cytoplasmic side of the membrane. The chain crosses the membrane as a helical span at residues 218-238 (VGKLMMTLVGVVILVAISTWL). Residues 239–246 (LHNQTIAR) lie on the Periplasmic side of the membrane. A helical transmembrane segment spans residues 247–267 (WALAIISAGIILIFAKETFAL). Topologically, residues 268–274 (QGGARRK) are cytoplasmic. The chain crosses the membrane as a helical span at residues 275–295 (MIVAFLLMLEAVVFFVLYSQM). Residues 296–320 (PTSLNFFAIHNVEHSIFGIAFEPEQ) lie on the Periplasmic side of the membrane. A helical transmembrane segment spans residues 321–341 (YQALNPFWIMVASPILAAIYN). Topologically, residues 342 to 352 (KMGDRLPMPHK) are cytoplasmic. Residues 353-373 (FAIGMVLCSGAFLVLPWGASF) traverse the membrane as a helical segment. At 374–383 (ANEAGIVSVN) the chain is on the periplasmic side. The chain crosses the membrane as a helical span at residues 384–404 (WLILSYALQSIGELMISGLGL). The Cytoplasmic portion of the chain corresponds to 405 to 414 (AMVAQLVPQR). Residues 415 to 435 (LMGFIMGSWFLTTAAAALIAG) form a helical membrane-spanning segment. Residues 436-460 (KVAALTAVPGGEVADPHASLAIYSH) are Periplasmic-facing. A helical transmembrane segment spans residues 461–481 (VFMQIGLATAVIAVLMLLTAP). At 482–490 (KLNRMTLGD) the chain is on the cytoplasmic side.

This sequence belongs to the major facilitator superfamily. Proton-dependent oligopeptide transporter (POT/PTR) (TC 2.A.17) family. DtpA subfamily.

The protein resides in the cell inner membrane. Proton-dependent permease that transports di- and tripeptides. The sequence is that of Dipeptide and tripeptide permease A from Edwardsiella piscicida.